The primary structure comprises 824 residues: FT-interacting protein 1 (824 aa).

C2 domains follow at residues 48-170 (WLGL…PQWY), 217-341 (VRGE…SRWF), and 385-522 (YISD…THAY). Helical transmembrane passes span 625–645 (AVSL…VCHW), 657–677 (LLLI…LYMF), and 764–784 (ATCL…VTPF).

Belongs to the MCTP family. Interacts with RFT1 and PI4KG4. In terms of tissue distribution, specifically expressed in the phloem including companion cells.

Its subcellular location is the endoplasmic reticulum membrane. Functionally, involved in the export of the long day-specific flower-promoting signal (florigen) RFT1 from the phloem companion cells to sieve elements. Promotes flowering under long days through the transport of RFT1 from the leaves to the shoot apical meristem (SAM). This Oryza sativa subsp. japonica (Rice) protein is FT-interacting protein 1.